Consider the following 456-residue polypeptide: Bifunctional protein GlmU (456 aa).

The segment at 1–229 (MTKKALSAVI…VMEVEGANNR (229 aa)) is pyrophosphorylase. UDP-N-acetyl-alpha-D-glucosamine-binding positions include 11–14 (LAAG), K25, Q76, 81–82 (GT), 103–105 (YGD), G140, E154, N169, and N227. D105 is a binding site for Mg(2+). Residue N227 participates in Mg(2+) binding. The segment at 230–250 (LQLAALERYFQNKQASKLLLE) is linker. The N-acetyltransferase stretch occupies residues 251-456 (GVMIYDPARF…QGWQRPIKKK (206 aa)). UDP-N-acetyl-alpha-D-glucosamine-binding residues include R333 and K351. H363 serves as the catalytic Proton acceptor. UDP-N-acetyl-alpha-D-glucosamine-binding residues include Y366 and N377. Residues A380, 386–387 (NY), S405, A423, and R440 contribute to the acetyl-CoA site.

This sequence in the N-terminal section; belongs to the N-acetylglucosamine-1-phosphate uridyltransferase family. It in the C-terminal section; belongs to the transferase hexapeptide repeat family. Homotrimer. The cofactor is Mg(2+).

The protein resides in the cytoplasm. It carries out the reaction alpha-D-glucosamine 1-phosphate + acetyl-CoA = N-acetyl-alpha-D-glucosamine 1-phosphate + CoA + H(+). It catalyses the reaction N-acetyl-alpha-D-glucosamine 1-phosphate + UTP + H(+) = UDP-N-acetyl-alpha-D-glucosamine + diphosphate. It participates in nucleotide-sugar biosynthesis; UDP-N-acetyl-alpha-D-glucosamine biosynthesis; N-acetyl-alpha-D-glucosamine 1-phosphate from alpha-D-glucosamine 6-phosphate (route II): step 2/2. The protein operates within nucleotide-sugar biosynthesis; UDP-N-acetyl-alpha-D-glucosamine biosynthesis; UDP-N-acetyl-alpha-D-glucosamine from N-acetyl-alpha-D-glucosamine 1-phosphate: step 1/1. It functions in the pathway bacterial outer membrane biogenesis; LPS lipid A biosynthesis. In terms of biological role, catalyzes the last two sequential reactions in the de novo biosynthetic pathway for UDP-N-acetylglucosamine (UDP-GlcNAc). The C-terminal domain catalyzes the transfer of acetyl group from acetyl coenzyme A to glucosamine-1-phosphate (GlcN-1-P) to produce N-acetylglucosamine-1-phosphate (GlcNAc-1-P), which is converted into UDP-GlcNAc by the transfer of uridine 5-monophosphate (from uridine 5-triphosphate), a reaction catalyzed by the N-terminal domain. In Haemophilus influenzae (strain 86-028NP), this protein is Bifunctional protein GlmU.